We begin with the raw amino-acid sequence, 195 residues long: ATP-dependent Clp protease proteolytic subunit (195 aa).

Ser-98 (nucleophile) is an active-site residue. His-123 is a catalytic residue.

The protein belongs to the peptidase S14 family. In terms of assembly, fourteen ClpP subunits assemble into 2 heptameric rings which stack back to back to give a disk-like structure with a central cavity, resembling the structure of eukaryotic proteasomes.

Its subcellular location is the cytoplasm. It catalyses the reaction Hydrolysis of proteins to small peptides in the presence of ATP and magnesium. alpha-casein is the usual test substrate. In the absence of ATP, only oligopeptides shorter than five residues are hydrolyzed (such as succinyl-Leu-Tyr-|-NHMec, and Leu-Tyr-Leu-|-Tyr-Trp, in which cleavage of the -Tyr-|-Leu- and -Tyr-|-Trp bonds also occurs).. In terms of biological role, cleaves peptides in various proteins in a process that requires ATP hydrolysis. Has a chymotrypsin-like activity. Plays a major role in the degradation of misfolded proteins. The protein is ATP-dependent Clp protease proteolytic subunit of Thermoanaerobacter pseudethanolicus (strain ATCC 33223 / 39E) (Clostridium thermohydrosulfuricum).